The following is a 96-amino-acid chain: UPF0235 protein Ent638_3359 (96 aa).

Belongs to the UPF0235 family.

The polypeptide is UPF0235 protein Ent638_3359 (Enterobacter sp. (strain 638)).